A 421-amino-acid chain; its full sequence is MWCHRLSHLQSRLQDLLRGRVTRWALQQSNFKSLFPLAIYWHHTASKSLNCVWQQHEDHFELQYANNVMRFDYVWLRDHCRSASCYNSKTHQRSLDTASVDLCIQPQTIHLDETTLFFTWPDGHVTRYDLDWLMKNSYEGQKQKVIQPRILWNAEIYQQAQVPAVDFQTFLETKEGLKNFLQNFLLYGIAFVENVPPTQKHTEKLAERISLIRETIYGRMWFFTSDFSRGDTAYTKLALDRHTDTTYFQEPCGIQVFHCLKHEGTGGRTLLVDGFYAAEQVLQKAPEEFELLSKVPLKHEYIENVGECQNHMIGVGPVLNIYPWNKELYLIRYNNYDRAVINTVPYDVVHRWYTAHRTLTRELRRPENEFWVKLKPGKVLFIDNWRVLHGRESFTGYRQLCGCYLTRDDVLNTARLLGLQA.

The transit peptide at 1–15 directs the protein to the mitochondrion; the sequence is MWCHRLSHLQSRLQD. Lys236 is subject to N6-acetyllysine. 3 residues coordinate Fe cation: His242, Asp244, and His389.

Belongs to the gamma-BBH/TMLD family. In terms of assembly, homodimer. Requires Fe(2+) as cofactor. L-ascorbate serves as cofactor.

Its subcellular location is the mitochondrion matrix. It catalyses the reaction N(6),N(6),N(6)-trimethyl-L-lysine + 2-oxoglutarate + O2 = (3S)-3-hydroxy-N(6),N(6),N(6)-trimethyl-L-lysine + succinate + CO2. It participates in amine and polyamine biosynthesis; carnitine biosynthesis. Its function is as follows. Converts trimethyllysine (TML) into hydroxytrimethyllysine (HTML). This is Trimethyllysine dioxygenase, mitochondrial (TMLHE) from Bos taurus (Bovine).